The following is a 949-amino-acid chain: Isoleucine--tRNA ligase (949 aa).

A 'HIGH' region motif is present at residues 58 to 68 (PYANGDIHIGH). An L-isoleucyl-5'-AMP-binding site is contributed by Glu567. The 'KMSKS' region motif lies at 608-612 (KMSKS). An ATP-binding site is contributed by Lys611. Residues Cys912, Cys915, Cys932, and Cys935 each coordinate Zn(2+).

Belongs to the class-I aminoacyl-tRNA synthetase family. IleS type 1 subfamily. As to quaternary structure, monomer. Requires Zn(2+) as cofactor.

It is found in the cytoplasm. The enzyme catalyses tRNA(Ile) + L-isoleucine + ATP = L-isoleucyl-tRNA(Ile) + AMP + diphosphate. Catalyzes the attachment of isoleucine to tRNA(Ile). As IleRS can inadvertently accommodate and process structurally similar amino acids such as valine, to avoid such errors it has two additional distinct tRNA(Ile)-dependent editing activities. One activity is designated as 'pretransfer' editing and involves the hydrolysis of activated Val-AMP. The other activity is designated 'posttransfer' editing and involves deacylation of mischarged Val-tRNA(Ile). The polypeptide is Isoleucine--tRNA ligase (Vibrio cholerae serotype O1 (strain ATCC 39315 / El Tor Inaba N16961)).